The primary structure comprises 539 residues: Chaperone Ric-8A (539 aa).

The interval 506-539 is disordered; the sequence is PMGVTSDGRLGPLDEAAQKMLQRQESSDLDSDSD.

Belongs to the synembryn family.

It is found in the cytoplasm. Its subcellular location is the cell cortex. Chaperone that specifically binds and folds nascent G alpha proteins prior to G protein heterotrimer formation, promoting their stability and activity: folds GNAI1, GNAO1, GNA13 and GNAQ. Does not fold G(s) G-alpha proteins GNAS nor GNAL. Also acts as a guanine nucleotide exchange factor (GEF) for G alpha proteins by stimulating exchange of bound GDP for free GTP. In Xenopus laevis (African clawed frog), this protein is Chaperone Ric-8A (ric8a).